The following is an 82-amino-acid chain: Sec-independent protein translocase protein TatA (82 aa).

A helical transmembrane segment spans residues 1–21 (MGIFDWKHWIVILIVVVLVFG). The tract at residues 43 to 82 (VNTEEDDKKEQPAAQPAQPLNQPHTIDAQAQKVEEPARKD) is disordered.

The protein belongs to the TatA/E family. In terms of assembly, the Tat system comprises two distinct complexes: a TatABC complex, containing multiple copies of TatA, TatB and TatC subunits, and a separate TatA complex, containing only TatA subunits. Substrates initially bind to the TatABC complex, which probably triggers association of the separate TatA complex to form the active translocon.

The protein localises to the cell inner membrane. In terms of biological role, part of the twin-arginine translocation (Tat) system that transports large folded proteins containing a characteristic twin-arginine motif in their signal peptide across membranes. TatA could form the protein-conducting channel of the Tat system. The protein is Sec-independent protein translocase protein TatA of Pseudomonas paraeruginosa (strain DSM 24068 / PA7) (Pseudomonas aeruginosa (strain PA7)).